We begin with the raw amino-acid sequence, 125 residues long: Calcitonin receptor-stimulating peptide 2 (125 aa).

Residues 1-25 form the signal peptide; sequence MGFWKFLPFLVLSFLVVYQAGMFQA. Residues 26–77 constitute a propeptide that is removed on maturation; the sequence is APFRSALENDFDPAILTEKEMCLLLAAVMNDYVQMKTSELKQEAEHFHITAQ. The cysteines at positions 81 and 86 are disulfide-linked.

Belongs to the calcitonin family.

Its subcellular location is the secreted. This Capra hircus (Goat) protein is Calcitonin receptor-stimulating peptide 2 (CRSP2).